Reading from the N-terminus, the 862-residue chain is Alanine--tRNA ligase (862 aa).

The Zn(2+) site is built by His552, His556, Cys653, and His657.

Belongs to the class-II aminoacyl-tRNA synthetase family. It depends on Zn(2+) as a cofactor.

The protein resides in the cytoplasm. It carries out the reaction tRNA(Ala) + L-alanine + ATP = L-alanyl-tRNA(Ala) + AMP + diphosphate. Its function is as follows. Catalyzes the attachment of alanine to tRNA(Ala) in a two-step reaction: alanine is first activated by ATP to form Ala-AMP and then transferred to the acceptor end of tRNA(Ala). Also edits incorrectly charged Ser-tRNA(Ala) and Gly-tRNA(Ala) via its editing domain. In Nitrosospira multiformis (strain ATCC 25196 / NCIMB 11849 / C 71), this protein is Alanine--tRNA ligase.